Here is a 278-residue protein sequence, read N- to C-terminus: Sulfur carrier protein FdhD (278 aa).

The active-site Cysteine persulfide intermediate is the Cys120.

Belongs to the FdhD family.

Its subcellular location is the cytoplasm. Its function is as follows. Required for formate dehydrogenase (FDH) activity. Acts as a sulfur carrier protein that transfers sulfur from IscS to the molybdenum cofactor prior to its insertion into FDH. In Bordetella petrii (strain ATCC BAA-461 / DSM 12804 / CCUG 43448), this protein is Sulfur carrier protein FdhD.